The primary structure comprises 492 residues: Mitochondrial distribution and morphology protein 12 (492 aa).

The 492-residue stretch at 1–492 (MSIDLNWETV…VYPSFWTFLV (492 aa)) folds into the SMP-LTD domain. Disordered stretches follow at residues 68-158 (DFYE…STPG), 199-301 (LEGH…GHPR), and 379-434 (AVGG…GSGN). Positions 78–90 (VASDDSEGEEDAV) are enriched in acidic residues. Positions 130 to 139 (SPGGPGGPGM) are enriched in gly residues. Positions 246–257 (LNPNSLAPPSSS) are enriched in low complexity. The span at 270–285 (TTPAPGSATALSGSNE) shows a compositional bias: polar residues. The segment covering 387-400 (GLSSPGEGPSQAQG) has biased composition (low complexity). A compositionally biased stretch (gly residues) spans 401-415 (QGQGQGQGQGQGQTP). Positions 416–428 (GAGQQKQQKKQAG) are enriched in low complexity.

It belongs to the MDM12 family. In terms of assembly, component of the ER-mitochondria encounter structure (ERMES) or MDM complex, composed of MMM1, MDM10, MDM12 and MDM34. An MMM1 homodimer associates with one molecule of MDM12 on each side in a pairwise head-to-tail manner, and the SMP-LTD domains of MMM1 and MDM12 generate a continuous hydrophobic tunnel for phospholipid trafficking.

The protein localises to the mitochondrion outer membrane. The protein resides in the endoplasmic reticulum membrane. Component of the ERMES/MDM complex, which serves as a molecular tether to connect the endoplasmic reticulum (ER) and mitochondria. Components of this complex are involved in the control of mitochondrial shape and protein biogenesis, and function in nonvesicular lipid trafficking between the ER and mitochondria. MDM12 is required for the interaction of the ER-resident membrane protein MMM1 and the outer mitochondrial membrane-resident beta-barrel protein MDM10. The MDM12-MMM1 subcomplex functions in the major beta-barrel assembly pathway that is responsible for biogenesis of all mitochondrial outer membrane beta-barrel proteins, and acts in a late step after the SAM complex. The MDM10-MDM12-MMM1 subcomplex further acts in the TOM40-specific pathway after the action of the MDM12-MMM1 complex. Essential for establishing and maintaining the structure of mitochondria and maintenance of mtDNA nucleoids. The polypeptide is Mitochondrial distribution and morphology protein 12 (Chaetomium globosum (strain ATCC 6205 / CBS 148.51 / DSM 1962 / NBRC 6347 / NRRL 1970) (Soil fungus)).